We begin with the raw amino-acid sequence, 140 residues long: Protein SamA (140 aa).

Catalysis depends on for autocatalytic cleavage activity residues Ser61 and Lys98.

It belongs to the peptidase S24 family.

Its function is as follows. Involved in UV protection and mutation. This chain is Protein SamA (samA), found in Salmonella typhimurium (strain LT2 / SGSC1412 / ATCC 700720).